The primary structure comprises 136 residues: Crossover junction endodeoxyribonuclease Hjc (136 aa).

Glu9 lines the Mg(2+) pocket. The active site involves Ser29. Positions 38 and 51 each coordinate Mg(2+).

The protein belongs to the Holliday junction resolvase Hjc family. As to quaternary structure, homodimer. Requires Mg(2+) as cofactor.

The catalysed reaction is Endonucleolytic cleavage at a junction such as a reciprocal single-stranded crossover between two homologous DNA duplexes (Holliday junction).. A structure-specific endonuclease that resolves Holliday junction (HJ) intermediates during genetic recombination. Cleaves 4-way DNA junctions introducing paired nicks in opposing strands, leaving a 5'-terminal phosphate and a 3'-terminal hydroxyl group that are subsequently ligated to produce recombinant products. The polypeptide is Crossover junction endodeoxyribonuclease Hjc (Archaeoglobus fulgidus (strain ATCC 49558 / DSM 4304 / JCM 9628 / NBRC 100126 / VC-16)).